The following is a 540-amino-acid chain: Chaperonin GroEL 1 (540 aa).

Residues 29 to 32, 86 to 90, glycine 415, 479 to 481, and aspartate 495 each bind ATP; these read TIGP, DGTTT, and NAA.

It belongs to the chaperonin (HSP60) family. In terms of assembly, forms a cylinder of 14 subunits composed of two heptameric rings stacked back-to-back. Interacts with the co-chaperonin GroES.

The protein localises to the cytoplasm. The enzyme catalyses ATP + H2O + a folded polypeptide = ADP + phosphate + an unfolded polypeptide.. Functionally, together with its co-chaperonin GroES, plays an essential role in assisting protein folding. The GroEL-GroES system forms a nano-cage that allows encapsulation of the non-native substrate proteins and provides a physical environment optimized to promote and accelerate protein folding. The sequence is that of Chaperonin GroEL 1 from Streptomyces albus G.